A 397-amino-acid chain; its full sequence is ATP-dependent RNA helicase eIF4A (397 aa).

The short motif at 23–51 is the Q motif element; sequence YKFDDLNLKPNIVRGIFGYGYETPSAIQQ. In terms of domain architecture, Helicase ATP-binding spans 54 to 224; the sequence is ILPITEGRDV…TKFMNNPVRI (171 aa). 67 to 74 contacts ATP; that stretch reads AQSGTGKT. The DEAD box motif lies at 172-175; that stretch reads DEAD. The region spanning 235–396 is the Helicase C-terminal domain; it reads GIKQFYINVE…EMPADIGALF (162 aa).

Belongs to the DEAD box helicase family. eIF4A subfamily. In terms of assembly, component of the eIF4F complex, which composition varies with external and internal environmental conditions. It is composed of at least eIF4A, eIF4E and eIF4G.

Its subcellular location is the cytoplasm. The catalysed reaction is ATP + H2O = ADP + phosphate + H(+). Functionally, ATP-dependent RNA helicase which is a subunit of the eIF4F complex involved in cap recognition and is required for mRNA binding to ribosome. In the current model of translation initiation, eIF4A unwinds RNA secondary structures in the 5'-UTR of mRNAs which is necessary to allow efficient binding of the small ribosomal subunit, and subsequent scanning for the initiator codon. The polypeptide is ATP-dependent RNA helicase eIF4A (TIF1) (Candida albicans (strain SC5314 / ATCC MYA-2876) (Yeast)).